The chain runs to 144 residues: Large ribosomal subunit protein eL27 (144 aa).

Belongs to the eukaryotic ribosomal protein eL27 family.

The protein resides in the cytoplasm. The chain is Large ribosomal subunit protein eL27 (RPL27) from Tetrahymena thermophila.